Here is a 111-residue protein sequence, read N- to C-terminus: Nucleoid-associated protein VF_1686 (111 aa).

Disordered stretches follow at residues 1–23 (MFGG…DRMQ) and 89–111 (TQKE…KMPF).

The protein belongs to the YbaB/EbfC family. In terms of assembly, homodimer.

The protein resides in the cytoplasm. Its subcellular location is the nucleoid. Functionally, binds to DNA and alters its conformation. May be involved in regulation of gene expression, nucleoid organization and DNA protection. The polypeptide is Nucleoid-associated protein VF_1686 (Aliivibrio fischeri (strain ATCC 700601 / ES114) (Vibrio fischeri)).